The following is a 177-amino-acid chain: Acetyltransferase (177 aa).

Residues Ala-4 to Gly-174 form the N-acetyltransferase domain. Residues Glu-27, Leu-96–Val-98, Gly-104–Arg-109, Asp-130–Thr-131, and Tyr-141 each bind acetyl-CoA.

Functionally, renders tabtoxin-producing pathogens tolerant to their own phytotoxins. In Pseudomonas amygdali pv. tabaci (Pseudomonas syringae pv. tabaci), this protein is Acetyltransferase (ttr).